We begin with the raw amino-acid sequence, 151 residues long: S-protein homolog 74 (151 aa).

The N-terminal stretch at 1–25 (MNYIKQFILAICFYLVLTCQDHVLA) is a signal peptide.

It belongs to the plant self-incompatibility (S1) protein family.

The protein resides in the secreted. This is S-protein homolog 74 from Arabidopsis thaliana (Mouse-ear cress).